Consider the following 596-residue polypeptide: Fructan 1-exohydrolase w3 (596 aa).

The first 20 residues, 1–20 (MAQAWAFLLPVLVLGSYVTS), serve as a signal peptide directing secretion. Residue Asp75 is part of the active site. N-linked (GlcNAc...) asparagine glycans are attached at residues Asn168, Asn236, and Asn248. Cysteines 446 and 492 form a disulfide.

Belongs to the glycosyl hydrolase 32 family. Expressed in the stem, particularly the penultimate internode. Little expression is detected in roots and in the peduncle part of the stem.

The catalysed reaction is Hydrolysis of terminal, non-reducing (2-&gt;1)-linked beta-D-fructofuranose residues in fructans.. With respect to regulation, inhibited by sucrose. In terms of biological role, hydrolyzes inulin-type beta-(2,1)-fructans and beta-(2,1)-linkages in branched fructans. Has low activity against beta-(2,6)-linked fructans. May play a role as a beta-(2,1)-trimmer during graminan biosynthesis. The chain is Fructan 1-exohydrolase w3 from Triticum aestivum (Wheat).